The sequence spans 1250 residues: DNA-directed RNA polymerase subunit beta (1250 aa).

A disordered region spans residues 1215-1250 (QDLNDDDINPDDTIDAELDDNLFDDDFDDTFDDDDL).

This sequence belongs to the RNA polymerase beta chain family. The RNAP catalytic core consists of 2 alpha, 1 beta, 1 beta' and 1 omega subunit. When a sigma factor is associated with the core the holoenzyme is formed, which can initiate transcription.

The catalysed reaction is RNA(n) + a ribonucleoside 5'-triphosphate = RNA(n+1) + diphosphate. DNA-dependent RNA polymerase catalyzes the transcription of DNA into RNA using the four ribonucleoside triphosphates as substrates. The protein is DNA-directed RNA polymerase subunit beta of Acetivibrio thermocellus (strain ATCC 27405 / DSM 1237 / JCM 9322 / NBRC 103400 / NCIMB 10682 / NRRL B-4536 / VPI 7372) (Clostridium thermocellum).